The sequence spans 456 residues: Probable polygalacturonase At3g15720 (456 aa).

Positions Met1 to Ala23 are cleaved as a signal peptide. PbH1 repeat units lie at residues Cys169–Ala195, Ser196–Ser217, Thr219–Ser239, Val249–Thr270, Ala278–Gln299, and Ser314–Cys341. Asp210 functions as the Proton donor in the catalytic mechanism. His233 is a catalytic residue.

Belongs to the glycosyl hydrolase 28 family.

The protein localises to the secreted. It is found in the cell wall. The catalysed reaction is (1,4-alpha-D-galacturonosyl)n+m + H2O = (1,4-alpha-D-galacturonosyl)n + (1,4-alpha-D-galacturonosyl)m.. This chain is Probable polygalacturonase At3g15720, found in Arabidopsis thaliana (Mouse-ear cress).